The chain runs to 376 residues: Flap endonuclease 1 (376 aa).

The segment at Met1–Ala105 is N-domain. A Mg(2+)-binding site is contributed by Asp34. DNA contacts are provided by Arg47 and Arg71. Positions 87, 159, 161, 180, and 182 each coordinate Mg(2+). Residues Gln123–Tyr254 are I-domain. A DNA-binding site is contributed by Glu159. The DNA site is built by Gly232 and Asp234. Mg(2+) is bound at residue Asp234. The segment at Ala336–Phe344 is interaction with PCNA. Residues Ser354 to Lys376 are disordered. Basic residues predominate over residues Val360 to Lys376.

The protein belongs to the XPG/RAD2 endonuclease family. FEN1 subfamily. As to quaternary structure, interacts with PCNA. Three molecules of FEN1 bind to one PCNA trimer with each molecule binding to one PCNA monomer. PCNA stimulates the nuclease activity without altering cleavage specificity. Requires Mg(2+) as cofactor. Post-translationally, phosphorylated. Phosphorylation upon DNA damage induces relocalization to the nuclear plasma.

It is found in the nucleus. The protein localises to the nucleolus. The protein resides in the nucleoplasm. It localises to the mitochondrion. Functionally, structure-specific nuclease with 5'-flap endonuclease and 5'-3' exonuclease activities involved in DNA replication and repair. During DNA replication, cleaves the 5'-overhanging flap structure that is generated by displacement synthesis when DNA polymerase encounters the 5'-end of a downstream Okazaki fragment. It enters the flap from the 5'-end and then tracks to cleave the flap base, leaving a nick for ligation. Also involved in the long patch base excision repair (LP-BER) pathway, by cleaving within the apurinic/apyrimidinic (AP) site-terminated flap. Acts as a genome stabilization factor that prevents flaps from equilibrating into structures that lead to duplications and deletions. Also possesses 5'-3' exonuclease activity on nicked or gapped double-stranded DNA, and exhibits RNase H activity. Also involved in replication and repair of rDNA and in repairing mitochondrial DNA. The protein is Flap endonuclease 1 of Entamoeba histolytica (strain ATCC 30459 / HM-1:IMSS / ABRM).